The chain runs to 343 residues: Small ribosomal subunit biogenesis GTPase RsgA (343 aa).

The 160-residue stretch at 116–275 (RGQLKPVAAN…LIDSPGIREF (160 aa)) folds into the CP-type G domain. GTP-binding positions include 163–166 (NKFD) and 217–225 (GQSGVGKSS). Cys-299, Cys-304, His-306, and Cys-312 together coordinate Zn(2+).

It belongs to the TRAFAC class YlqF/YawG GTPase family. RsgA subfamily. In terms of assembly, monomer. Associates with 30S ribosomal subunit, binds 16S rRNA. The cofactor is Zn(2+).

It localises to the cytoplasm. Its function is as follows. One of several proteins that assist in the late maturation steps of the functional core of the 30S ribosomal subunit. Helps release RbfA from mature subunits. May play a role in the assembly of ribosomal proteins into the subunit. Circularly permuted GTPase that catalyzes slow GTP hydrolysis, GTPase activity is stimulated by the 30S ribosomal subunit. In Pseudomonas fluorescens (strain Pf0-1), this protein is Small ribosomal subunit biogenesis GTPase RsgA.